A 1154-amino-acid chain; its full sequence is Kinesin-like protein KIN-7E, chloroplastic (1154 aa).

Composition is skewed to low complexity over residues 1-14 (MSSSSRPGRASISP) and 29-109 (VAAA…PPVA). The transit peptide at 1–21 (MSSSSRPGRASISPFRSRRTS) directs the protein to the chloroplast. A disordered region spans residues 1–109 (MSSSSRPGRA…RAAGRAPPVA (109 aa)). Residues 119–437 (NIMVTVRFRP…LKFAHRSKHI (319 aa)) form the Kinesin motor domain. 199 to 206 (GVTSSGKT) is a binding site for ATP. Positions 441–523 (ASQNKIIDEK…AALMGRIQRL (83 aa)) form a coiled coil. Residues 620-674 (LSTSVDSESTASGSPSFSRSSQQKHPLLDLKDGRRKSMTRKGDDPALTDSFPGRT) are disordered. The span at 628-640 (STASGSPSFSRSS) shows a compositional bias: low complexity. 2 coiled-coil regions span residues 734–761 (DSQIQEQIEKLKNEIDEKKSHIRVLEQR) and 801–845 (ADNR…DNVA). The tract at residues 838–885 (AKNEDNVASMQSSEPSSTSSNPRDLANEVASHSKMPSRTTEDHTESPL) is disordered. The span at 846 to 857 (SMQSSEPSSTSS) shows a compositional bias: low complexity. The stretch at 894 to 967 (AEIENLKLDK…DLAAAKDQTR (74 aa)) forms a coiled coil.

It belongs to the TRAFAC class myosin-kinesin ATPase superfamily. Kinesin family. KIN-7 subfamily.

The protein localises to the plastid. The protein resides in the chloroplast. The chain is Kinesin-like protein KIN-7E, chloroplastic from Oryza sativa subsp. japonica (Rice).